The primary structure comprises 686 residues: Aminodeoxychorismate synthase (686 aa).

One can recognise a Glutamine amidotransferase type-1 domain in the interval 2–194 (RTLLIDNYDS…RDLALAHHRA (193 aa)). Catalysis depends on C81, which acts as the Nucleophile. Active-site residues include H168 and E170. The interval 233-686 (LDSSSVLEGA…LDGSAVAGAR (454 aa)) is PABB component.

It in the C-terminal section; belongs to the anthranilate synthase component I family.

It carries out the reaction chorismate + L-glutamine = 4-amino-4-deoxychorismate + L-glutamate. The protein operates within antibiotic biosynthesis. Functionally, involved in chloramphenicol biosynthesis. Catalyzes the biosynthesis of 4-amino-4-deoxychorismate (ADC) from chorismate and glutamine. This chain is Aminodeoxychorismate synthase, found in Streptomyces venezuelae (strain ATCC 10712 / CBS 650.69 / DSM 40230 / JCM 4526 / NBRC 13096 / PD 04745).